The chain runs to 253 residues: Molybdate import ATP-binding protein MolC (253 aa).

Residues 5-229 (LSVENLGFYY…NLTALFHLPM (225 aa)) enclose the ABC transporter domain. Residue 38 to 45 (GQNGCGKS) participates in ATP binding.

The protein belongs to the ABC transporter superfamily. The complex is composed of two ATP-binding proteins (MolC), two transmembrane proteins (MolB) and a solute-binding protein (MolA).

It is found in the cell inner membrane. It carries out the reaction molybdate(out) + ATP + H2O = molybdate(in) + ADP + phosphate + H(+). Its activity is regulated as follows. The MolBCA complex shows a decrease in affinity in the presence of increasing concentrations of substrate and nucleotide. Its function is as follows. Part of the ABC transporter complex MolBCA involved in molybdate import. Responsible for energy coupling to the transport system. Functions as a low-affinity molybdate transporter. In Haemophilus influenzae (strain ATCC 51907 / DSM 11121 / KW20 / Rd), this protein is Molybdate import ATP-binding protein MolC.